The following is a 202-amino-acid chain: Glycerol-3-phosphate acyltransferase 1 (202 aa).

The next 5 helical transmembrane spans lie at 8 to 28, 85 to 105, 122 to 142, 146 to 166, and 173 to 190; these read AGMI…MSTG, LSLT…IWPL, ILVV…FVLA, QFTL…LIMA, and AGLA…RKNI.

This sequence belongs to the PlsY family. In terms of assembly, probably interacts with PlsX.

The protein resides in the cell membrane. It carries out the reaction an acyl phosphate + sn-glycerol 3-phosphate = a 1-acyl-sn-glycero-3-phosphate + phosphate. It functions in the pathway lipid metabolism; phospholipid metabolism. Catalyzes the transfer of an acyl group from acyl-phosphate (acyl-PO(4)) to glycerol-3-phosphate (G3P) to form lysophosphatidic acid (LPA). This enzyme utilizes acyl-phosphate as fatty acyl donor, but not acyl-CoA or acyl-ACP. The polypeptide is Glycerol-3-phosphate acyltransferase 1 (Desulfitobacterium hafniense (strain Y51)).